The primary structure comprises 317 residues: Ribosomal protein L11 methyltransferase (317 aa).

S-adenosyl-L-methionine is bound by residues threonine 158, glycine 179, aspartate 201, and asparagine 244.

It belongs to the methyltransferase superfamily. PrmA family.

The protein localises to the cytoplasm. The catalysed reaction is L-lysyl-[protein] + 3 S-adenosyl-L-methionine = N(6),N(6),N(6)-trimethyl-L-lysyl-[protein] + 3 S-adenosyl-L-homocysteine + 3 H(+). Its function is as follows. Methylates ribosomal protein L11. This is Ribosomal protein L11 methyltransferase from Streptococcus pyogenes serotype M4 (strain MGAS10750).